Consider the following 825-residue polypeptide: Probable phosphoketolase (825 aa).

This sequence belongs to the XFP family. The cofactor is thiamine diphosphate.

The protein is Probable phosphoketolase of Bifidobacterium animalis subsp. lactis (strain AD011).